A 453-amino-acid chain; its full sequence is D-aminoacyl-tRNA deacylase (453 aa).

The segment at 428-453 is disordered; sequence VRADVALHERPRERVRRPSDDEGKGN.

This sequence belongs to the DtdA deacylase family. Monomer. Zn(2+) serves as cofactor.

It carries out the reaction a D-aminoacyl-tRNA + H2O = a tRNA + a D-alpha-amino acid + H(+). It catalyses the reaction glycyl-tRNA(Ala) + H2O = tRNA(Ala) + glycine + H(+). D-aminoacyl-tRNA deacylase with broad substrate specificity. By recycling D-aminoacyl-tRNA to D-amino acids and free tRNA molecules, this enzyme counteracts the toxicity associated with the formation of D-aminoacyl-tRNA entities in vivo. In Halobacterium salinarum (strain ATCC 29341 / DSM 671 / R1), this protein is D-aminoacyl-tRNA deacylase.